Consider the following 411-residue polypeptide: Protein PHLOEM PROTEIN 2-LIKE A5 (411 aa).

Positions 20 to 157 (TGPQVFINFR…KWTEALFSVC (138 aa)) constitute a TIR domain. Glutamate 94 is a catalytic residue.

It catalyses the reaction NAD(+) + H2O = ADP-D-ribose + nicotinamide + H(+). The protein is Protein PHLOEM PROTEIN 2-LIKE A5 (PP2A5) of Arabidopsis thaliana (Mouse-ear cress).